The primary structure comprises 842 residues: Protein P (842 aa).

The interval 1-177 (MPLSYQHFRK…FCGSPYSWEQ (177 aa)) is terminal protein domain (TP). Positions 178–346 (ELQHGRLVFQ…YCLTHIVNLL (169 aa)) are spacer. The disordered stretch occupies residues 218–274 (LKQSRLGLQPQQGSLARGKSGRSGSIRARVPPTTRRSFGVEPSGSGHIDNRASSTSS). Residues 347-690 (EDWGPCTEHG…YLHLYPVARR (344 aa)) are polymerase/reverse transcriptase domain (RT). Residues 357–600 (EHNIRIPRTP…YSLNFMGYVI (244 aa)) enclose the Reverse transcriptase domain. Mg(2+) is bound by residues aspartate 429, aspartate 551, and aspartate 552.

This sequence belongs to the hepadnaviridae P protein family.

It catalyses the reaction DNA(n) + a 2'-deoxyribonucleoside 5'-triphosphate = DNA(n+1) + diphosphate. It carries out the reaction Endonucleolytic cleavage to 5'-phosphomonoester.. With respect to regulation, activated by host HSP70 and HSP40 in vitro to be able to bind the epsilon loop of the pgRNA. Because deletion of the RNase H region renders the protein partly chaperone-independent, the chaperones may be needed indirectly to relieve occlusion of the RNA-binding site by this domain. Inhibited by several reverse-transcriptase inhibitors: Lamivudine, Adefovir and Entecavir. Its function is as follows. Multifunctional enzyme that converts the viral RNA genome into dsDNA in viral cytoplasmic capsids. This enzyme displays a DNA polymerase activity that can copy either DNA or RNA templates, and a ribonuclease H (RNase H) activity that cleaves the RNA strand of RNA-DNA heteroduplexes in a partially processive 3'- to 5'-endonucleasic mode. Neo-synthesized pregenomic RNA (pgRNA) are encapsidated together with the P protein, and reverse-transcribed inside the nucleocapsid. Initiation of reverse-transcription occurs first by binding the epsilon loop on the pgRNA genome, and is initiated by protein priming, thereby the 5'-end of (-)DNA is covalently linked to P protein. Partial (+)DNA is synthesized from the (-)DNA template and generates the relaxed circular DNA (RC-DNA) genome. After budding and infection, the RC-DNA migrates in the nucleus, and is converted into a plasmid-like covalently closed circular DNA (cccDNA). The activity of P protein does not seem to be necessary for cccDNA generation, and is presumably released from (+)DNA by host nuclear DNA repair machinery. The sequence is that of Protein P from Hepatitis B virus genotype C subtype adr (isolate Korea/Kim/1989) (HBV-C).